The sequence spans 862 residues: Ecdysone-induced protein 78C (862 aa).

4 disordered regions span residues 28–83 (SSEQ…EEAL), 97–138 (LHFF…KQHH), 173–210 (ASLS…LNCT), and 230–353 (ASNH…NNNN). The segment covering 37–46 (KQEDLIKDFT) has biased composition (basic and acidic residues). Positions 47 to 82 (RDEEEQPSEEEAEEEDNEEDEEEEGEEEEEDEDEEA) are enriched in acidic residues. Residues 105 to 119 (DSSTQGAYSEANSLE) are compositionally biased toward polar residues. Composition is skewed to low complexity over residues 173-206 (ASLS…QQHQ), 230-291 (ASNH…NNSV), 308-335 (QQQQ…QQQQ), and 342-353 (SSSSNGSSNNNN). The segment at residues 360–435 (FVPCKVCGDK…AGMSRDSVRY (76 aa)) is a DNA-binding region (nuclear receptor). 2 NR C4-type zinc fingers span residues 363 to 383 (CKVC…CEGC) and 399 to 418 (CLRD…CQYC). The tract at residues 444–557 (ELNGAAASSA…NNNSSSGNAS (114 aa)) is disordered. Positions 447-460 (GAAASSAAAGAPAS) are enriched in low complexity. Residues 463 to 472 (VDDSTSSTLH) show a composition bias toward polar residues. The segment covering 475–508 (HLQQQQQQHLLQQQQQQQHQPQLQQHHQLQQQPH) has biased composition (low complexity). Polar residues predominate over residues 516–533 (TPSTPQTPQMCSIASSPS). The segment covering 539 to 555 (NSANNNNNNNNNSSSGN) has biased composition (low complexity). The NR LBD domain maps to 626–855 (YTEELTRELM…PPLFAEIFDI (230 aa)).

The protein belongs to the nuclear hormone receptor family. NR1 subfamily.

Its subcellular location is the nucleus. Functionally, induces the early late puff 78C which triggers puparium formation and development. The chain is Ecdysone-induced protein 78C (Eip78C) from Drosophila melanogaster (Fruit fly).